Reading from the N-terminus, the 399-residue chain is CCA-adding enzyme (399 aa).

Residues Gly32 and Arg35 each contribute to the ATP site. 2 residues coordinate CTP: Gly32 and Arg35. 2 residues coordinate Mg(2+): Asp45 and Asp47. Positions 116, 159, 162, 165, and 168 each coordinate ATP. Arg116, Asp159, Arg162, Arg165, and Arg168 together coordinate CTP.

This sequence belongs to the tRNA nucleotidyltransferase/poly(A) polymerase family. Bacterial CCA-adding enzyme type 3 subfamily. In terms of assembly, homodimer. It depends on Mg(2+) as a cofactor.

The catalysed reaction is a tRNA precursor + 2 CTP + ATP = a tRNA with a 3' CCA end + 3 diphosphate. It carries out the reaction a tRNA with a 3' CCA end + 2 CTP + ATP = a tRNA with a 3' CCACCA end + 3 diphosphate. In terms of biological role, catalyzes the addition and repair of the essential 3'-terminal CCA sequence in tRNAs without using a nucleic acid template. Adds these three nucleotides in the order of C, C, and A to the tRNA nucleotide-73, using CTP and ATP as substrates and producing inorganic pyrophosphate. tRNA 3'-terminal CCA addition is required both for tRNA processing and repair. Also involved in tRNA surveillance by mediating tandem CCA addition to generate a CCACCA at the 3' terminus of unstable tRNAs. While stable tRNAs receive only 3'-terminal CCA, unstable tRNAs are marked with CCACCA and rapidly degraded. The polypeptide is CCA-adding enzyme (Streptococcus pneumoniae serotype 19F (strain G54)).